The chain runs to 325 residues: mRNA decay activator protein ZFP36 (325 aa).

The segment at 1–15 (MDLAAIYKSLLSLSP) is necessary for nuclear export. Residues 1–98 (MDLAAIYKSL…PTSPTATPTT (98 aa)) are necessary and sufficient for the association with mRNA decay enzymes and mRNA decay activation. Necessary for localization of ARE-containing mRNAs to processing bodies (PBs) regions lie at residues 1–172 (MDLA…DLAA) and 98–325 (TSSR…SVSE). Residues 15-48 (PELPSDLGETESSTSWASSGPWSLSSSDSSLPEA) are compositionally biased toward low complexity. A disordered region spans residues 15-101 (PELPSDLGET…PTATPTTSSR (87 aa)). The residue at position 58 (serine 58) is a Phosphoserine; by MAPKAPK2. Serine 64 carries the phosphoserine modification. Residues 69-73 (PPPPG) form a P-P-P-P-G repeat. Low complexity predominate over residues 75–101 (APLAPRPSSELSPSPTSPTATPTTSSR). 2 positions are modified to phosphoserine: serine 86 and serine 88. Position 90 is a phosphothreonine (threonine 90). Serine 91 is subject to Phosphoserine. The interval 93–166 (TATPTTSSRY…GSRCHFIHNP (74 aa)) is necessary for nuclear localization. The tract at residues 95–171 (TPTTSSRYKT…FIHNPSEDLA (77 aa)) is necessary for RNA-binding. C3H1-type zinc fingers lie at residues 101 to 129 (RYKT…HGLG) and 139 to 167 (KYKT…HNPS). The segment at 101-192 (RYKTELCRTF…ISFSGLPSGR (92 aa)) is necessary for interaction with PABPN1. Residue serine 167 is modified to Phosphoserine. Residues 172-325 (APGHPHVLRQ…PIFNRISVSE (154 aa)) are necessary for mRNA decay activation. Serine 184 bears the Phosphoserine; by MAPKAPK2 mark. 2 disordered regions span residues 185 to 248 (FSGL…TPAC) and 260 to 325 (VWGP…SVSE). Phosphoserine is present on serine 195. The P-P-P-P-G repeat unit spans residues 196–200 (PPPAS). The span at 204-214 (PSVPSWSFSPS) shows a compositional bias: low complexity. Phosphoserine is present on serine 216. One copy of the P-P-P-P-G repeat lies at 217–222 (PPPPPG). The residue at position 227 (serine 227) is a Phosphoserine; by MAPK1; in vitro. 3 positions are modified to phosphoserine: serine 275, serine 295, and serine 322. Residues 285–295 (SSGSSLGGSDS) are compositionally biased toward low complexity. Residues 311 to 325 (APRRLPIFNRISVSE) form an interaction with CNOT1 region.

In terms of assembly, associates with cytoplasmic CCR4-NOT and PAN2-PAN3 deadenylase complexes to trigger ARE-containing mRNA deadenylation and decay processes. Part of a mRNA decay activation complex at least composed of poly(A)-specific exoribonucleases CNOT6, EXOSC2 and XRN1 and mRNA-decapping enzymes DCP1A and DCP2. Associates with the RNA exosome complex. Interacts (via phosphorylated form) with 14-3-3 proteins; these interactions promote exclusion of ZFP36 from cytoplasmic stress granules in response to arsenite treatment in a MAPKAPK2-dependent manner and does not prevent CCR4-NOT deadenylase complex recruitment or ZFP36-induced ARE-containing mRNA deadenylation and decay processes. Interacts with 14-3-3 proteins; these interactions occur in response to rapamycin in an Akt-dependent manner. Interacts with AGO2 and AGO4. Interacts (via C-terminus) with CNOT1; this interaction occurs in a RNA-independent manner and induces mRNA deadenylation. Interacts (via N-terminus) with CNOT6. Interacts with CNOT6L. Interacts (via C-terminus) with CNOT7; this interaction occurs in a RNA-independent manner, induces mRNA deadenylation and is inhibited in a phosphorylation MAPKAPK2-dependent manner. Interacts (via unphosphorylated form) with CNOT8; this interaction occurs in a RNA-independent manner and is inhibited in a phosphorylation MAPKAPK2-dependent manner. Interacts with DCP1A. Interacts (via N-terminus) with DCP2. Interacts with EDC3. Interacts (via N-terminus) with EXOSC2. Interacts with heat shock 70 kDa proteins. Interacts with KHSRP; this interaction increases upon cytokine-induced treatment. Interacts with MAP3K4; this interaction enhances the association with SH3KBP1/CIN85. Interacts with MAPKAPK2; this interaction occurs upon skeletal muscle satellite cell activation. Interacts with NCL. Interacts with NUP214; this interaction increases upon lipopolysaccharide (LPS) stimulation. Interacts with PABPC1; this interaction occurs in a RNA-dependent manner. Interacts (via hypophosphorylated form) with PABPN1 (via RRM domain and C-terminal arginine-rich region); this interaction occurs in the nucleus in a RNA-independent manner, decreases in presence of single-stranded poly(A) RNA-oligomer and in a p38 MAPK-dependent-manner and inhibits nuclear poly(A) tail synthesis. Interacts with PAN2. Interacts (via C3H1-type zinc finger domains) with PKM. Interacts (via C3H1-type zinc finger domains) with nuclear RNA poly(A) polymerase. Interacts with PPP2CA; this interaction occurs in LPS-stimulated cells and induces ZFP36 dephosphorylation, and hence may promote ARE-containing mRNAs decay. Interacts (via C-terminus) with PRR5L (via C-terminus); this interaction may accelerate ZFP36-mediated mRNA decay during stress. Interacts (via C-terminus) with SFN; this interaction occurs in a phosphorylation-dependent manner. Interacts (via extreme C-terminal region) with SH3KBP1/CIN85 (via SH3 domains); this interaction enhances MAP3K4-induced phosphorylation of ZFP36 at Ser-64 and Ser-91 and does not alter neither ZFP36 binding to ARE-containing transcripts nor TNF-alpha mRNA decay. Interacts with XRN1. Interacts (via C-terminus and Ser-184 phosphorylated form) with YWHAB; this interaction occurs in a p38/MAPKAPK2-dependent manner, increases cytoplasmic localization of ZFP36 and protects ZFP36 from Ser-184 dephosphorylation by serine/threonine phosphatase 2A, and hence may be crucial for stabilizing ARE-containing mRNAs. Interacts (via phosphorylated form) with YWHAE. Interacts (via C-terminus) with YWHAG; this interaction occurs in a phosphorylation-dependent manner. Interacts with YWHAH; this interaction occurs in a phosphorylation-dependent manner. Interacts with YWHAQ; this interaction occurs in a phosphorylation-dependent manner. Interacts with (via C-terminus) YWHAZ; this interaction occurs in a phosphorylation-dependent manner. Does not interact with SH3KBP1. Interacts (via P-P-P-P-G repeats) with GIGYF2; the interaction is direct. In terms of processing, phosphorylated. Phosphorylation at serine and/or threonine residues occurs in a p38 MAPK- and MAPKAPK2-dependent manner. Phosphorylated by MAPKAPK2 at Ser-58 and Ser-184; phosphorylation increases its stability and cytoplasmic localization, promotes binding to 14-3-3 adapter proteins and inhibits the recruitment of cytoplasmic CCR4-NOT and PAN2-PAN3 deadenylase complexes to the mRNA decay machinery, thereby inhibiting ZFP36-induced ARE-containing mRNA deadenylation and decay processes. Phosphorylation by MAPKAPK2 does not impair ARE-containing RNA-binding. Phosphorylated in a MAPKAPK2- and p38 MAPK-dependent manner upon skeletal muscle satellite cell activation; this phosphorylation inhibits ZFP36-mediated mRNA decay activity, and hence stabilizes MYOD1 mRNA. Phosphorylated by MAPK1 upon mitogen stimulation. Phosphorylated at Ser-64 and Ser-91; these phosphorylations increase in a SH3KBP1-dependent manner. Phosphorylated at serine and threonine residues in a pyruvate kinase PKM- and p38 MAPK-dependent manner. Phosphorylation at Ser-58 may participate in the PKM-mediated degradation of ZFP36 in a p38 MAPK-dependent manner. Dephosphorylated by serine/threonine phosphatase 2A at Ser-184. Ubiquitinated; pyruvate kinase (PKM)-dependent ubiquitination leads to proteasomal degradation through a p38 MAPK signaling pathway.

The protein resides in the nucleus. It is found in the cytoplasm. It localises to the cytoplasmic granule. Its subcellular location is the P-body. In terms of biological role, zinc-finger RNA-binding protein that destabilizes numerous cytoplasmic AU-rich element (ARE)-containing mRNA transcripts by promoting their poly(A) tail removal or deadenylation, and hence provide a mechanism for attenuating protein synthesis. Acts as an 3'-untranslated region (UTR) ARE mRNA-binding adapter protein to communicate signaling events to the mRNA decay machinery. Recruits deadenylase CNOT7 (and probably the CCR4-NOT complex) via association with CNOT1, and hence promotes ARE-mediated mRNA deadenylation. Also functions by recruiting components of the cytoplasmic RNA decay machinery to the bound ARE-containing mRNAs. Self regulates by destabilizing its own mRNA. Binds to 3'-UTR ARE of numerous mRNAs. Also binds to ARE of its own mRNA. Plays a role in anti-inflammatory responses; suppresses tumor necrosis factor (TNF)-alpha production by stimulating ARE-mediated TNF-alpha mRNA decay and several other inflammatory ARE-containing mRNAs in interferon (IFN)- and/or lipopolysaccharide (LPS)-induced macrophages. Also plays a role in the regulation of dendritic cell maturation at the post-transcriptional level, and hence operates as part of a negative feedback loop to limit the inflammatory response. Promotes ARE-mediated mRNA decay of hypoxia-inducible factor HIF1A mRNA during the response of endothelial cells to hypoxia. Positively regulates early adipogenesis of preadipocytes by promoting ARE-mediated mRNA decay of immediate early genes (IEGs). Negatively regulates hematopoietic/erythroid cell differentiation by promoting ARE-mediated mRNA decay of the transcription factor STAT5B mRNA. Plays a role in maintaining skeletal muscle satellite cell quiescence by promoting ARE-mediated mRNA decay of the myogenic determination factor MYOD1 mRNA. Also associates with and regulates the expression of non-ARE-containing target mRNAs at the post-transcriptional level, such as MHC class I mRNAs. Participates in association with argonaute RISC catalytic components in the ARE-mediated mRNA decay mechanism; assists microRNA (miRNA) targeting ARE-containing mRNAs. May also play a role in the regulation of cytoplasmic mRNA decapping; enhances decapping of ARE-containing RNAs, in vitro. Involved in the delivery of target ARE-mRNAs to processing bodies (PBs). In addition to its cytosolic mRNA-decay function, affects nuclear pre-mRNA processing. Negatively regulates nuclear poly(A)-binding protein PABPN1-stimulated polyadenylation activity on ARE-containing pre-mRNA during LPS-stimulated macrophages. Also involved in the regulation of stress granule (SG) and P-body (PB) formation and fusion. Plays a role in the regulation of keratinocyte proliferation, differentiation and apoptosis. Plays a role as a tumor suppressor by inhibiting cell proliferation in breast cancer cells. The sequence is that of mRNA decay activator protein ZFP36 from Ovis aries (Sheep).